Consider the following 146-residue polypeptide: Peptide methionine sulfoxide reductase MsrB (146 aa).

In terms of domain architecture, MsrB spans 6–129; the sequence is SAEAIAKLSA…NSASLRFVPK (124 aa). Cys118 acts as the Nucleophile in catalysis.

Belongs to the MsrB Met sulfoxide reductase family.

It carries out the reaction L-methionyl-[protein] + [thioredoxin]-disulfide + H2O = L-methionyl-(R)-S-oxide-[protein] + [thioredoxin]-dithiol. This is Peptide methionine sulfoxide reductase MsrB from Brucella melitensis biotype 1 (strain ATCC 23456 / CCUG 17765 / NCTC 10094 / 16M).